Here is a 370-residue protein sequence, read N- to C-terminus: Putative agmatine deiminase (370 aa).

Cys-361 (amidino-cysteine intermediate) is an active-site residue.

Belongs to the agmatine deiminase family.

The enzyme catalyses agmatine + H2O = N-carbamoylputrescine + NH4(+). This Shewanella baltica (strain OS223) protein is Putative agmatine deiminase.